A 660-amino-acid polypeptide reads, in one-letter code: Acetyl-coenzyme A synthetase (660 aa).

CoA is bound by residues 197–200 and Thr-317; that span reads RGGK. ATP is bound by residues 397 to 399, 421 to 426, Asp-512, and Arg-528; these read GEP and DTWWQT. CoA is bound at residue Ser-536. An ATP-binding site is contributed by Arg-539. Mg(2+) contacts are provided by Val-550, His-552, and Val-555. Position 625 is an N6-acetyllysine (Lys-625).

Belongs to the ATP-dependent AMP-binding enzyme family. It depends on Mg(2+) as a cofactor. Acetylated. Deacetylation by the SIR2-homolog deacetylase activates the enzyme.

It carries out the reaction acetate + ATP + CoA = acetyl-CoA + AMP + diphosphate. Catalyzes the conversion of acetate into acetyl-CoA (AcCoA), an essential intermediate at the junction of anabolic and catabolic pathways. AcsA undergoes a two-step reaction. In the first half reaction, AcsA combines acetate with ATP to form acetyl-adenylate (AcAMP) intermediate. In the second half reaction, it can then transfer the acetyl group from AcAMP to the sulfhydryl group of CoA, forming the product AcCoA. This is Acetyl-coenzyme A synthetase from Burkholderia lata (strain ATCC 17760 / DSM 23089 / LMG 22485 / NCIMB 9086 / R18194 / 383).